The chain runs to 830 residues: Kinesin-like protein KIN-14B (830 aa).

Residues 56–97 (ENISDDNTESEAKVQKIQDELVSLNAQLKQITLQRREALNNY) are a coiled coil. Positions 103–425 (NIRVFCRIRP…LGFATRVRSI (323 aa)) constitute a Kinesin motor domain. 182–189 (GQTGSGKT) provides a ligand contact to ATP. Positions 434–476 (EMKARKETLLIDLGQKVNDLEHECEDIRRKIKNLEESMEHLTG) form a coiled coil.

Belongs to the TRAFAC class myosin-kinesin ATPase superfamily. Kinesin family. KIN-14 subfamily.

The polypeptide is Kinesin-like protein KIN-14B (Oryza sativa subsp. japonica (Rice)).